A 414-amino-acid chain; its full sequence is MTTQRSPGLFRRLAHGSLVKQILVGLVLGILLAWISKPAAEAVGLLGTLFVGALKAVAPILVLMLVMASIANHQHGQKTNIRPILFLYLLGTFSAALAAVVFSFAFPSTLHLSSSAGDISPPSGIVEVMRGLVMSMVSNPIDALLKGNYIGILVWAIGLGFALRHGNETTKNLVNDMSNAVTFMVKLVIRFAPFGIFGLVSSTLATTGFSTLWGYAQLLVVLVGCMLLVALVVNPLLVWWKIRRNPFPLVLLCLRESGVYAFFTRSSAANIPVNMALCEKLNLDRDTYSVSIPLGATINMAGAAITITVLTLAAVNTLGIPVDLPTALLLSVVASLCACGASGVAGGSLLLIPLACNMFGISNDIAMQVVAVGFIIGVLQDSCETALNSSTDVLFTAAACQAEDDRLANSALRN.

Over 2-15 the chain is Cytoplasmic; it reads TTQRSPGLFRRLAH. The chain crosses the membrane as a helical span at residues 16–36; that stretch reads GSLVKQILVGLVLGILLAWIS. Residues 37–45 lie on the Periplasmic side of the membrane; that stretch reads KPAAEAVGL. A helical transmembrane segment spans residues 46–66; it reads LGTLFVGALKAVAPILVLMLV. At 67 to 83 the chain is on the cytoplasmic side; that stretch reads MASIANHQHGQKTNIRP. A helical membrane pass occupies residues 84–104; that stretch reads ILFLYLLGTFSAALAAVVFSF. The Periplasmic segment spans residues 105-142; the sequence is AFPSTLHLSSSAGDISPPSGIVEVMRGLVMSMVSNPID. The helical transmembrane segment at 143 to 163 threads the bilayer; the sequence is ALLKGNYIGILVWAIGLGFAL. Residues 164-179 lie on the Cytoplasmic side of the membrane; it reads RHGNETTKNLVNDMSN. Residues 180-200 form a helical membrane-spanning segment; that stretch reads AVTFMVKLVIRFAPFGIFGLV. Topologically, residues 201–217 are periplasmic; sequence SSTLATTGFSTLWGYAQ. A helical transmembrane segment spans residues 218 to 238; that stretch reads LLVVLVGCMLLVALVVNPLLV. The Cytoplasmic portion of the chain corresponds to 239-299; that stretch reads WWKIRRNPFP…VSIPLGATIN (61 aa). The helical transmembrane segment at 300–320 threads the bilayer; that stretch reads MAGAAITITVLTLAAVNTLGI. Topologically, residues 321–331 are periplasmic; it reads PVDLPTALLLS. Residues 332 to 352 form a helical membrane-spanning segment; the sequence is VVASLCACGASGVAGGSLLLI. At 353-414 the chain is on the cytoplasmic side; sequence PLACNMFGIS…DRLANSALRN (62 aa).

This sequence belongs to the dicarboxylate/amino acid:cation symporter (DAACS) (TC 2.A.23) family.

Its subcellular location is the cell inner membrane. The catalysed reaction is L-serine(in) + Na(+)(in) = L-serine(out) + Na(+)(out). The enzyme catalyses L-threonine(in) + Na(+)(in) = L-threonine(out) + Na(+)(out). Functionally, involved in the import of serine and threonine into the cell, with the concomitant import of sodium (symport system). In Shigella flexneri, this protein is Serine/threonine transporter SstT.